The following is a 117-amino-acid chain: Protein YchN (117 aa).

This sequence to M.jannaschii MJ0989. As to quaternary structure, homohexamer. The hexamer is formed by a dimer of trimers.

This is Protein YchN (ychN) from Escherichia coli O157:H7.